A 404-amino-acid chain; its full sequence is Chorismate synthase (404 aa).

The NADP(+) site is built by Arg-43 and Arg-49. Residues 138–140 (RAS), 259–260 (QA), Gly-303, 318–322 (KPIST), and Arg-344 contribute to the FMN site.

This sequence belongs to the chorismate synthase family. In terms of assembly, homotetramer. It depends on FMNH2 as a cofactor.

It carries out the reaction 5-O-(1-carboxyvinyl)-3-phosphoshikimate = chorismate + phosphate. The protein operates within metabolic intermediate biosynthesis; chorismate biosynthesis; chorismate from D-erythrose 4-phosphate and phosphoenolpyruvate: step 7/7. In terms of biological role, catalyzes the anti-1,4-elimination of the C-3 phosphate and the C-6 proR hydrogen from 5-enolpyruvylshikimate-3-phosphate (EPSP) to yield chorismate, which is the branch point compound that serves as the starting substrate for the three terminal pathways of aromatic amino acid biosynthesis. This reaction introduces a second double bond into the aromatic ring system. This chain is Chorismate synthase, found in Mycolicibacterium paratuberculosis (strain ATCC BAA-968 / K-10) (Mycobacterium paratuberculosis).